The following is a 249-amino-acid chain: Type III pantothenate kinase (249 aa).

Residue 6 to 13 (DCGNSLIK) participates in ATP binding. Substrate-binding positions include tyrosine 93 and 100-103 (GLDR). Aspartate 102 acts as the Proton acceptor in catalysis. Aspartate 122 is a binding site for K(+). Threonine 125 contacts ATP. Residue threonine 181 coordinates substrate.

The protein belongs to the type III pantothenate kinase family. As to quaternary structure, homodimer. NH4(+) serves as cofactor. K(+) is required as a cofactor.

The protein resides in the cytoplasm. It catalyses the reaction (R)-pantothenate + ATP = (R)-4'-phosphopantothenate + ADP + H(+). It participates in cofactor biosynthesis; coenzyme A biosynthesis; CoA from (R)-pantothenate: step 1/5. In terms of biological role, catalyzes the phosphorylation of pantothenate (Pan), the first step in CoA biosynthesis. In Pseudomonas paraeruginosa (strain DSM 24068 / PA7) (Pseudomonas aeruginosa (strain PA7)), this protein is Type III pantothenate kinase.